We begin with the raw amino-acid sequence, 475 residues long: MRSEILASAFLGLAVRSIISLYSYSGFDSPPMHGDYEAQRHWQEITVNLAVGEWYTNSSNNDLQYWGLDYPPLTAYHSYLVGRIGASIDPRFVELHKSRGFESKEHKRFMRATVVSADVLIYLPAMLLLAYSLDKAFRSDDKLFLFTLVAAYPGQTLIDNGHFQYNNISLGFAAVAIAAILRRRFYAAAFFFTLALNYKQMELYHSLPFFAFLLGECVSQKSFASFIAEISRIAAVVLGTFAILWVPWLGSLQAVLQVLHRLFPVARGVFEDKVANVWCAVNVVWKLKKHISNDQMALVCIACTLIASLPTNVLLFRRRTNVGFLLALFNTSLAFFLFSFQVHEKTILLTALPALFLLKCWPDEMILFLEVTVFSMLPLLARDELLVPAVVATVAFHLIFKCFDSKSKLSNEYPLKYIANISQILMISVVVASLTVPAPTKYPDLWPLIISVTSCGHFFLFFLWGNVQQFSSKLS.

Helical transmembrane passes span 114-133, 161-181, 235-255, 296-316, 322-342, 385-405, 418-438, and 441-461; these read VVSA…AYSL, GHFQ…AAIL, AVVL…LQAV, MALV…VLLF, VGFL…SFQV, LLVP…CFDS, IANI…TVPA, and KYPD…FFLF.

Belongs to the ALG6/ALG8 glucosyltransferase family.

It localises to the endoplasmic reticulum membrane. It catalyses the reaction an alpha-D-Man-(1-&gt;2)-alpha-D-Man-(1-&gt;2)-alpha-D-Man-(1-&gt;3)-[alpha-D-Man-(1-&gt;2)-alpha-D-Man-(1-&gt;3)-[alpha-D-Man-(1-&gt;2)-alpha-D-Man-(1-&gt;6)]-alpha-D-Man-(1-&gt;6)]-beta-D-Man-(1-&gt;4)-beta-D-GlcNAc-(1-&gt;4)-alpha-D-GlcNAc-diphospho-di-trans,poly-cis-dolichol + a di-trans,poly-cis-dolichyl beta-D-glucosyl phosphate = an alpha-D-Glc-(1-&gt;3)-alpha-D-Man-(1-&gt;2)-alpha-D-Man-(1-&gt;2)-alpha-D-Man-(1-&gt;3)-[alpha-D-Man-(1-&gt;2)-alpha-D-Man-(1-&gt;3)-[alpha-D-Man-(1-&gt;2)-alpha-D-Man-(1-&gt;6)]-alpha-D-Man-(1-&gt;6)]-beta-D-Man-(1-&gt;4)-beta-D-GlcNAc-(1-&gt;4)-alpha-D-GlcNAc-diphospho-di-trans,poly-cis-dolichol + a di-trans,poly-cis-dolichyl phosphate + H(+). Its pathway is protein modification; protein glycosylation. Its function is as follows. Adds the first glucose residue to the lipid-linked oligosaccharide precursor for N-linked glycosylation. Transfers glucose from dolichyl phosphate glucose (Dol-P-Glc) onto the lipid-linked oligosaccharide Man(9)GlcNAc(2)-PP-Dol. Involved in cuticle differentiation. This chain is Probable dolichyl pyrophosphate Man9GlcNAc2 alpha-1,3-glucosyltransferase (gny), found in Drosophila melanogaster (Fruit fly).